Reading from the N-terminus, the 379-residue chain is Alcohol dehydrogenase class-3 (379 aa).

Positions 47, 69, 99, 102, 105, 113, and 176 each coordinate Zn(2+).

Belongs to the zinc-containing alcohol dehydrogenase family. Class-III subfamily. In terms of assembly, homodimer. Zn(2+) is required as a cofactor.

It localises to the cytoplasm. The catalysed reaction is a primary alcohol + NAD(+) = an aldehyde + NADH + H(+). It catalyses the reaction a secondary alcohol + NAD(+) = a ketone + NADH + H(+). It carries out the reaction S-(hydroxymethyl)glutathione + NADP(+) = S-formylglutathione + NADPH + H(+). The enzyme catalyses S-(hydroxymethyl)glutathione + NAD(+) = S-formylglutathione + NADH + H(+). Class-III ADH is remarkably ineffective in oxidizing ethanol, but it readily catalyzes the oxidation of long-chain primary alcohols and the oxidation of S-(hydroxymethyl) glutathione. This Dictyostelium discoideum (Social amoeba) protein is Alcohol dehydrogenase class-3 (adh5).